We begin with the raw amino-acid sequence, 163 residues long: Allophycocyanin alpha-B chain (163 aa).

Asn-71 bears the N4-methylasparagine mark. Cys-81 provides a ligand contact to (2R,3E)-phycocyanobilin.

It belongs to the phycobiliprotein family. Heterodimer of an alpha and a beta chain. In terms of processing, contains one covalently linked bilin chromophore.

Its subcellular location is the cellular thylakoid membrane. Its function is as follows. Light-harvesting photosynthetic bile pigment-protein from the phycobiliprotein complex. Allophycocyanin has a maximum absorption at approximately 650 nanometers. The chain is Allophycocyanin alpha-B chain from Synechococcus sp. (strain ATCC 27144 / PCC 6301 / SAUG 1402/1) (Anacystis nidulans).